We begin with the raw amino-acid sequence, 1009 residues long: Membrane alanyl aminopeptidase (1009 aa).

A signal peptide spans Met1–Cys15. The propeptide at Val16 to Ser52 is activation peptide. Residue Gly338–Asn342 participates in substrate binding. His374 contributes to the Zn(2+) binding site. Glu375 acts as the Proton acceptor in catalysis. Positions 378 and 397 each coordinate Zn(2+). An N-linked (GlcNAc...) asparagine glycan is attached at Asn906. A disordered region spans residues Pro955 to Pro980. Residue Asp987 is the site of GPI-anchor amidated aspartate attachment. The propeptide at Ser988–Leu1009 is removed in mature form.

The protein belongs to the peptidase M1 family. Zn(2+) is required as a cofactor.

Its subcellular location is the cell membrane. Functionally, binds to the B.thuringiensis toxin, CryIA(C). This Heliothis virescens (Tobacco budworm moth) protein is Membrane alanyl aminopeptidase.